A 225-amino-acid polypeptide reads, in one-letter code: Leucyl/phenylalanyl-tRNA--protein transferase (225 aa).

It belongs to the L/F-transferase family.

It is found in the cytoplasm. It catalyses the reaction N-terminal L-lysyl-[protein] + L-leucyl-tRNA(Leu) = N-terminal L-leucyl-L-lysyl-[protein] + tRNA(Leu) + H(+). It carries out the reaction N-terminal L-arginyl-[protein] + L-leucyl-tRNA(Leu) = N-terminal L-leucyl-L-arginyl-[protein] + tRNA(Leu) + H(+). The catalysed reaction is L-phenylalanyl-tRNA(Phe) + an N-terminal L-alpha-aminoacyl-[protein] = an N-terminal L-phenylalanyl-L-alpha-aminoacyl-[protein] + tRNA(Phe). In terms of biological role, functions in the N-end rule pathway of protein degradation where it conjugates Leu, Phe and, less efficiently, Met from aminoacyl-tRNAs to the N-termini of proteins containing an N-terminal arginine or lysine. The polypeptide is Leucyl/phenylalanyl-tRNA--protein transferase (Nitrobacter winogradskyi (strain ATCC 25391 / DSM 10237 / CIP 104748 / NCIMB 11846 / Nb-255)).